Consider the following 280-residue polypeptide: Protein scylla (280 aa).

The disordered stretch occupies residues 39–96; it reads LMSKKAKTTTGGSSNGSNATATSTTTSTSSSIKHKQPAGSSNNNVGQSQSKKTKPSGS. 2 stretches are compositionally biased toward low complexity: residues 46–69 and 77–96; these read TTTGGSSNGSNATATSTTTSTSSS and GSSNNNVGQSQSKKTKPSGS.

The protein belongs to the DDIT4 family.

The protein resides in the cytoplasm. In terms of biological role, inhibits cell growth by regulating the Tor pathway upstream of the Tsc1-Tsc2 complex and downstream of Akt1. Acts as a cell death activator during head development. This is Protein scylla (scyl) from Drosophila melanogaster (Fruit fly).